Reading from the N-terminus, the 164-residue chain is Peptide deformylase (164 aa).

Fe cation-binding residues include cysteine 87 and histidine 129. Residue glutamate 130 is part of the active site. A Fe cation-binding site is contributed by histidine 133.

Belongs to the polypeptide deformylase family. Fe(2+) is required as a cofactor.

The catalysed reaction is N-terminal N-formyl-L-methionyl-[peptide] + H2O = N-terminal L-methionyl-[peptide] + formate. Functionally, removes the formyl group from the N-terminal Met of newly synthesized proteins. Requires at least a dipeptide for an efficient rate of reaction. N-terminal L-methionine is a prerequisite for activity but the enzyme has broad specificity at other positions. The protein is Peptide deformylase of Thermotoga neapolitana (strain ATCC 49049 / DSM 4359 / NBRC 107923 / NS-E).